Consider the following 152-residue polypeptide: UPF0178 protein CKL_3490 (152 aa).

It belongs to the UPF0178 family.

In Clostridium kluyveri (strain ATCC 8527 / DSM 555 / NBRC 12016 / NCIMB 10680 / K1), this protein is UPF0178 protein CKL_3490.